The chain runs to 344 residues: Dihydroorotase (344 aa).

Zn(2+) is bound by residues H14 and H16. Substrate-binding positions include 16–18 (HLR) and N42. Positions 100, 137, and 175 each coordinate Zn(2+). K100 carries the post-translational modification N6-carboxylysine. A substrate-binding site is contributed by H137. Position 220 (L220) interacts with substrate. Residue D248 coordinates Zn(2+). D248 is an active-site residue. The substrate site is built by H252 and A264.

It belongs to the metallo-dependent hydrolases superfamily. DHOase family. Class II DHOase subfamily. In terms of assembly, homodimer. The cofactor is Zn(2+).

The enzyme catalyses (S)-dihydroorotate + H2O = N-carbamoyl-L-aspartate + H(+). It functions in the pathway pyrimidine metabolism; UMP biosynthesis via de novo pathway; (S)-dihydroorotate from bicarbonate: step 3/3. Functionally, catalyzes the reversible cyclization of carbamoyl aspartate to dihydroorotate. The sequence is that of Dihydroorotase from Cupriavidus metallidurans (strain ATCC 43123 / DSM 2839 / NBRC 102507 / CH34) (Ralstonia metallidurans).